A 203-amino-acid chain; its full sequence is Holliday junction branch migration complex subunit RuvA (203 aa).

The segment at 1–62 (MYEYFLGQVT…ENGMSLFGFF (62 aa)) is domain I. Residues 63–141 (DADEKALFEK…DLNVDVTGQT (79 aa)) form a domain II region. The segment at 142-148 (ALDVDAP) is flexible linker. The segment at 149 to 203 (AVDGALADALAALEALGYSKADVKKVTKKLETFSQTQGADTNTLLSEGLRLLMKK) is domain III.

This sequence belongs to the RuvA family. Homotetramer. Forms an RuvA(8)-RuvB(12)-Holliday junction (HJ) complex. HJ DNA is sandwiched between 2 RuvA tetramers; dsDNA enters through RuvA and exits via RuvB. An RuvB hexamer assembles on each DNA strand where it exits the tetramer. Each RuvB hexamer is contacted by two RuvA subunits (via domain III) on 2 adjacent RuvB subunits; this complex drives branch migration. In the full resolvosome a probable DNA-RuvA(4)-RuvB(12)-RuvC(2) complex forms which resolves the HJ.

The protein localises to the cytoplasm. The RuvA-RuvB-RuvC complex processes Holliday junction (HJ) DNA during genetic recombination and DNA repair, while the RuvA-RuvB complex plays an important role in the rescue of blocked DNA replication forks via replication fork reversal (RFR). RuvA specifically binds to HJ cruciform DNA, conferring on it an open structure. The RuvB hexamer acts as an ATP-dependent pump, pulling dsDNA into and through the RuvAB complex. HJ branch migration allows RuvC to scan DNA until it finds its consensus sequence, where it cleaves and resolves the cruciform DNA. The polypeptide is Holliday junction branch migration complex subunit RuvA (Lactiplantibacillus plantarum (strain ATCC BAA-793 / NCIMB 8826 / WCFS1) (Lactobacillus plantarum)).